Here is a 156-residue protein sequence, read N- to C-terminus: 1-methylthio-D-xylulose 5-phosphate methylsulfurylase (156 aa).

One can recognise a Cupin type-2 domain in the interval 55 to 122; the sequence is YFEVGPGGHS…ADEALGFLCM (68 aa). Residues Glu67, His69, His73, and His107 each coordinate Mn(2+). The active site involves Cys121.

It catalyses the reaction S-methyl-1-thio-D-xylulose 5-phosphate + glutathione = S-(methylsulfanyl)glutathione + 1-deoxy-D-xylulose 5-phosphate. It carries out the reaction S-(methylsulfanyl)glutathione + AH2 = methanethiol + glutathione + A. It functions in the pathway amino-acid biosynthesis; L-methionine biosynthesis via salvage pathway. It participates in metabolic intermediate biosynthesis; 1-deoxy-D-xylulose 5-phosphate biosynthesis. Its function is as follows. Catalyzes the formation of S-(methylsulfanyl)glutathione and 1-deoxy-D-xylulose 5-phosphate (DXP) from 1-methylthioxylulose 5-phosphate (MTXu-5P). The S-(methylsulfanyl)glutathione is reductively cleaved to relase methanethiol in a second reaction. Involved in the MTA-isoprenoid shunt of the methionine salvage pathway. The polypeptide is 1-methylthio-D-xylulose 5-phosphate methylsulfurylase (Rhodospirillum rubrum (strain ATCC 11170 / ATH 1.1.1 / DSM 467 / LMG 4362 / NCIMB 8255 / S1)).